Reading from the N-terminus, the 589-residue chain is MGAARIAPGLALLLCCPVLSSAYALVDADDVMTKEEQIFLLHRAQAQCEKRLKEVLQRPADIMESDKGWASASTSGKPKKEKPSGKLHPESEEDKEVPTGSRPRGRPCLPEWDHILCWPLGAPGEVVAMPCPDYIYDFNHKGHAYRRCDRNGSWELVPGHNRTWANYSECVKFLTNETREREVFDRLGMIYTVGYSVSLASLTVAVLILAYFRRLHCTRNYIHMHLFLSFMLRAVSIFVKDAVLYSGTALDEAERLTEEELRAIAQAPPPPAAAAGYVGCRVAVTFFLYFLATNYYWILVEGLYLHSLIFMAFFSEKKYLWGFTVFGWGLPAIFVAVWVSVRATLANTGCWDLSSGNKKWIIQVPILASIVLNFILFINIVRVLATKLRETNAGRCDTRQQYRKLLKSTLVLMPLFGVHYIVFMATPYTEVSGTLWQVQMHYEMLFNSFQGFFVAIIYCFCNGEVQAEIKKSWSRWTLALDFKRKARSGSSSYSYGPMVSHTSVTNVGPRTGLGLPLSPRLLPAATTNGHPPLPGHTKSGSPALQATPPAVAAPKEDGFLNGSCSGLDEEACAPERPPVLLQEEWETVM.

An N-terminal signal peptide occupies residues 1–28 (MGAARIAPGLALLLCCPVLSSAYALVDA). Topologically, residues 29 to 188 (DDVMTKEEQI…REREVFDRLG (160 aa)) are extracellular. 3 disulfide bridges follow: cysteine 48/cysteine 117, cysteine 108/cysteine 148, and cysteine 131/cysteine 170. The tract at residues 64-105 (ESDKGWASASTSGKPKKEKPSGKLHPESEEDKEVPTGSRPRG) is disordered. Over residues 81–90 (EKPSGKLHPE) the composition is skewed to basic and acidic residues. N-linked (GlcNAc...) asparagine glycosylation is found at asparagine 151, asparagine 161, asparagine 166, and asparagine 176. The chain crosses the membrane as a helical span at residues 189 to 209 (MIYTVGYSVSLASLTVAVLIL). The Cytoplasmic segment spans residues 210–223 (AYFRRLHCTRNYIH). Residues 224–244 (MHLFLSFMLRAVSIFVKDAVL) form a helical membrane-spanning segment. Over 245–294 (YSGTALDEAERLTEEELRAIAQAPPPPAAAAGYVGCRVAVTFFLYFLATN) the chain is Extracellular. Residues 295–315 (YYWILVEGLYLHSLIFMAFFS) form a helical membrane-spanning segment. Over 316–318 (EKK) the chain is Cytoplasmic. Residues 319–339 (YLWGFTVFGWGLPAIFVAVWV) form a helical membrane-spanning segment. The Extracellular segment spans residues 340-360 (SVRATLANTGCWDLSSGNKKW). A helical membrane pass occupies residues 361–381 (IIQVPILASIVLNFILFINIV). Topologically, residues 382–404 (RVLATKLRETNAGRCDTRQQYRK) are cytoplasmic. Residues 405-425 (LLKSTLVLMPLFGVHYIVFMA) traverse the membrane as a helical segment. Residues 426–439 (TPYTEVSGTLWQVQ) lie on the Extracellular side of the membrane. The chain crosses the membrane as a helical span at residues 440-460 (MHYEMLFNSFQGFFVAIIYCF). The Cytoplasmic segment spans residues 461-589 (CNGEVQAEIK…LLQEEWETVM (129 aa)). Residues 473 to 476 (WSRW) carry the Important for interaction with G proteins motif. The tract at residues 524–549 (AATTNGHPPLPGHTKSGSPALQATPP) is disordered. Phosphothreonine is present on threonine 547.

Belongs to the G-protein coupled receptor 2 family. Homodimer in the absence of bound ligand. Peptide hormone binding leads to dissociation of the homodimer. In terms of processing, N-glycosylated.

It is found in the cell membrane. In terms of biological role, G-protein-coupled receptor for parathyroid hormone (PTH) and for parathyroid hormone-related peptide (PTHLH). Ligand binding causes a conformation change that triggers signaling via guanine nucleotide-binding proteins (G proteins) and modulates the activity of downstream effectors, such as adenylate cyclase (cAMP). PTH1R is coupled to G(s) G alpha proteins and mediates activation of adenylate cyclase activity. PTHLH dissociates from PTH1R more rapidly than PTH; as consequence, the cAMP response induced by PTHLH decays faster than the response induced by PTH. The protein is Parathyroid hormone/parathyroid hormone-related peptide receptor (PTH1R) of Bos taurus (Bovine).